The primary structure comprises 857 residues: Cation/H(+) antiporter 25 (857 aa).

Transmembrane regions (helical) follow at residues 65 to 85 (FSTFLIEAILIIFFIKIVYVL), 93 to 110 (RIVCEIIGGMMIGPSMLG), 122 to 142 (PIANYICANIGLMGFFYFFFL), 161 to 181 (YIAAVSVLVPIACVGSTGAAL), 194 to 214 (SIGGVTFALGFTSFPVIYTVL), 227 to 247 (FAMSVTLLGDMVGVYVLVLFE), 259 to 279 (YSVIWFLISAAIMAACLLLVV), 313 to 333 (FLTDMFGMAIAVGPIWLGLVV), 385 to 405 (IYMSIVGFVTKFVSSTGAALF), 413 to 435 (SLTLGLMMNLRGQIDILLYLHWI), and 447 to 467 (VMVLYAIVVTGVTAPLISFLY). At Ser855 the chain carries Phosphoserine.

It belongs to the monovalent cation:proton antiporter 2 (CPA2) transporter (TC 2.A.37) family. CHX (TC 2.A.37.4) subfamily. As to expression, specifically expressed in pollen.

It localises to the membrane. In terms of biological role, may operate as a cation/H(+) antiporter. This Arabidopsis thaliana (Mouse-ear cress) protein is Cation/H(+) antiporter 25 (CHX25).